Consider the following 467-residue polypeptide: Spermatogenesis- and oogenesis-specific basic helix-loop-helix-containing protein 2 (467 aa).

The bHLH domain maps to glutamine 200–valine 251. The span at alanine 443–proline 453 shows a compositional bias: low complexity. Residues alanine 443–phenylalanine 467 are disordered.

As to quaternary structure, forms both hetero- and homodimers with SOHLH1. In terms of tissue distribution, preferentially expressed in the adult ovary and testis. Expressed in the majority of spermatogonia in adult animals, but not in the most undifferentiated spermatogonial population.

The protein localises to the nucleus. It is found in the cytoplasm. In terms of biological role, transcription regulator of both male and female germline differentiation. Suppresses genes involved in spermatogonial stem cells maintenance, and induces genes important for spermatogonial differentiation. Coordinates oocyte differentiation without affecting meiosis I. The protein is Spermatogenesis- and oogenesis-specific basic helix-loop-helix-containing protein 2 (Sohlh2) of Mus musculus (Mouse).